Reading from the N-terminus, the 135-residue chain is Ribonuclease P protein component (135 aa).

This sequence belongs to the RnpA family. As to quaternary structure, consists of a catalytic RNA component (M1 or rnpB) and a protein subunit.

It catalyses the reaction Endonucleolytic cleavage of RNA, removing 5'-extranucleotides from tRNA precursor.. Its function is as follows. RNaseP catalyzes the removal of the 5'-leader sequence from pre-tRNA to produce the mature 5'-terminus. It can also cleave other RNA substrates such as 4.5S RNA. The protein component plays an auxiliary but essential role in vivo by binding to the 5'-leader sequence and broadening the substrate specificity of the ribozyme. The sequence is that of Ribonuclease P protein component from Pseudomonas aeruginosa (strain LESB58).